The following is a 248-amino-acid chain: 1-(5-phosphoribosyl)-5-[(5-phosphoribosylamino)methylideneamino] imidazole-4-carboxamide isomerase (248 aa).

Asp8 serves as the catalytic Proton acceptor. The Proton donor role is filled by Asp129.

This sequence belongs to the HisA/HisF family.

It is found in the cytoplasm. It carries out the reaction 1-(5-phospho-beta-D-ribosyl)-5-[(5-phospho-beta-D-ribosylamino)methylideneamino]imidazole-4-carboxamide = 5-[(5-phospho-1-deoxy-D-ribulos-1-ylimino)methylamino]-1-(5-phospho-beta-D-ribosyl)imidazole-4-carboxamide. The protein operates within amino-acid biosynthesis; L-histidine biosynthesis; L-histidine from 5-phospho-alpha-D-ribose 1-diphosphate: step 4/9. In Rhizobium leguminosarum bv. trifolii (strain WSM2304), this protein is 1-(5-phosphoribosyl)-5-[(5-phosphoribosylamino)methylideneamino] imidazole-4-carboxamide isomerase.